The following is a 267-amino-acid chain: Putative metal-binding protein TM_0123 (267 aa).

The N-terminal stretch at 1–15 is a signal peptide; sequence MKKILLLLVLIVAVL. A divalent metal cation-binding residues include H53, H107, and H172.

Belongs to the bacterial solute-binding protein 9 family.

It is found in the periplasm. Functionally, part of an ATP-binding cassette (ABC) transport system involved in metal import. Binds a metal with high affinity and specificity and delivers it to the membrane permease for translocation into the cytoplasm. This is Putative metal-binding protein TM_0123 from Thermotoga maritima (strain ATCC 43589 / DSM 3109 / JCM 10099 / NBRC 100826 / MSB8).